The primary structure comprises 438 residues: GDP-mannose 6-dehydrogenase (438 aa).

6 residues coordinate NAD(+): tyrosine 10, valine 11, aspartate 30, lysine 35, threonine 86, and threonine 124. GDP-alpha-D-mannuronate is bound by residues glutamate 161, lysine 210, asparagine 214, histidine 217, asparagine 225, tyrosine 256, tyrosine 257, arginine 259, phenylalanine 262, and glycine 265. Residue cysteine 268 is part of the active site. Lysine 271 is a binding site for NAD(+). Lysine 324 is a GDP-alpha-D-mannuronate binding site. Arginine 331 contributes to the NAD(+) binding site.

The protein belongs to the UDP-glucose/GDP-mannose dehydrogenase family.

The enzyme catalyses GDP-alpha-D-mannose + 2 NAD(+) + H2O = GDP-alpha-D-mannuronate + 2 NADH + 3 H(+). It functions in the pathway glycan biosynthesis; alginate biosynthesis. Functionally, catalyzes the oxidation of guanosine diphospho-D-mannose (GDP-D-mannose) to GDP-D-mannuronic acid, a precursor for alginate polymerization. The alginate layer causes a mucoid phenotype and provides a protective barrier against host immune defenses and antibiotics. The chain is GDP-mannose 6-dehydrogenase (algD) from Pseudomonas putida (strain ATCC 47054 / DSM 6125 / CFBP 8728 / NCIMB 11950 / KT2440).